Here is a 257-residue protein sequence, read N- to C-terminus: UPF0246 protein AHA_3667 (257 aa).

The protein belongs to the UPF0246 family.

The protein is UPF0246 protein AHA_3667 of Aeromonas hydrophila subsp. hydrophila (strain ATCC 7966 / DSM 30187 / BCRC 13018 / CCUG 14551 / JCM 1027 / KCTC 2358 / NCIMB 9240 / NCTC 8049).